We begin with the raw amino-acid sequence, 428 residues long: Histidinol dehydrogenase (428 aa).

NAD(+) is bound by residues Tyr126, Gln188, and Asn211. Substrate contacts are provided by Ser234, Gln256, and His259. Zn(2+) is bound by residues Gln256 and His259. Active-site proton acceptor residues include Glu324 and His325. The substrate site is built by His325, Asp358, Glu412, and His417. Asp358 is a Zn(2+) binding site. His417 is a binding site for Zn(2+).

This sequence belongs to the histidinol dehydrogenase family. Requires Zn(2+) as cofactor.

The enzyme catalyses L-histidinol + 2 NAD(+) + H2O = L-histidine + 2 NADH + 3 H(+). It participates in amino-acid biosynthesis; L-histidine biosynthesis; L-histidine from 5-phospho-alpha-D-ribose 1-diphosphate: step 9/9. Functionally, catalyzes the sequential NAD-dependent oxidations of L-histidinol to L-histidinaldehyde and then to L-histidine. The sequence is that of Histidinol dehydrogenase from Chlorobium chlorochromatii (strain CaD3).